We begin with the raw amino-acid sequence, 501 residues long: uncharacterized protein (501 aa).

A helical transmembrane segment spans residues 26 to 46 (ILLLLLGLIVLVNIGINVATM). 2 disordered regions span residues 316–384 (RGTE…VRRR) and 409–501 (EASH…EKLN). Residues 476-490 (RSSSLPPASTSTLRP) show a composition bias toward low complexity.

The protein resides in the membrane. This is an uncharacterized protein from Homo sapiens (Human).